We begin with the raw amino-acid sequence, 2328 residues long: MMAVHLAVASLRRNESTIAFACGTHLNLEPNDWVSLTKMNMISPDGRSKMFDELANGYGRGEGIGVICLKRLDAAIRDGDHIECVIRETGTNQDGHTKGITAPSAEAQAALIRKTYRSAGLDPTQVGSRPSFFEAHGTGTHVGDPLEAKAIQAAFFPPGQEYSDDEVLYIGSVKTIVGHTEGTAGIAGLLRAALAVRYGSIPPNLLYTRMNAEVAQYANHLRVVTAANPWPTLPVGCPRRASVNSFGFGGSNVHVIVESYVNTAARRVTSIPSFGAREPIFTPFTFSAISERALMSLMEKYLKYLEDPKSSVSPRDLAWTMQYKRSEFPFRSAMSALTVEDLRKQLRKATDILSDESNTSHIIRASQSTQPLIMAIFTGQGAQWPGMGKDIIEQSPHACDIIARLDDSLASLPEDDRPTWKIREELAIDSSRSRMDEAALSQPLTTAVQILLVDLLDIAGVKVRTVVGHSSGEIAAAYAAGMITAEDAIRVAYYRGLHSKLAGGVAGQKGAMITTFLTPNQAVDLCNLPEFRGRIVPAAFNGPTAVTLSGDVDAVERVLLMLEAQNIFARKLNVEKAYHSHHMKACAPPYIQSLEQCGVPVMPPFMDSPIWFSSVNPGKRMDPQKALHGSYWAENLLSPVRFSDAITTAISETGVPDIFLEIGPHPALMKPVLQIISDVAKDGTVYSGLLKRSSNSILSFSNAMGSIWERFGRCAVNFSKLETTLSGGSPPVPAKDLPTYPWLHDREYWWENRWLRRRFEAAYPPNELLGEELSMGAQHETKWRSFLQPKDVPWLLDHKLNGVAVLPGAAYVAMAATAARRIYRKQTIIMIELNDLSFKLPITFPDDHTSIETVLTVVNIRSTTQQGQADFVFDFCSHQRQDELMTAARGSLTVQFGDDVNRTYPERLSQHSALTELDLDTFYNNLEGRGYNYTGPFRSITSLQRRMNFSTGRMDFTPSDMTFHPALLDGLFQATFAAENYPGDSAMLDFRVPSLVRSIKVFPARCDEMTAMMKEKVDFQVSRTGPSEYSGLLLCENGSGTAIQMDGFCTAPFRMSTPEEDVKMFSEVAWRQYVRDARSLTSICVLAAHEKEPTLACERVGFYYLRRLNETIPPEEEKQAAPHLRRLLEFARMVVCENLLGLLSHMSPEWIHDTEADIAKIIAEYSKLIDMRLVDAVGRAYPSIIRGHVSALSVLTEDGMLTQLYSEGLGFYQANSTMTRLVSTISNQYPNIHILEVGAGTGSATSGILPTTSYSSYTFTDVSPAFLATAKDKFRRYSDKMAFTTLDLDKDFEDQGFTANSFEVIVASNVLHAVTDINASLIRIRRLLRPGGYLVCTELPESYCVKTTVIMGALPGWWQGAPRGRNWSPALTEPQWDRVLKDTGFAGLDAISPLDNDLSQSYRVFVAQAVDERVVSLRDPLTHPPSRSHDSIMIIGCESLVKSQFLEQAGQILLPSFQDVIHVPRLEEITQDVTVPYSVLCLAELGKPVFQDMTAAKWSALQTLLGQATDIIWVTTGHKSPKKVEESYKSMAIGLGRVVRNELRDLRLRFVDVDDLNTLTARSVSQATLEWYMLGQWAAQGWGNQVLFPHDTELAFENGLILAPSVVHSKTKNDHYNSQQRRIVREAQPYRVPIELVYSLSTKQYDLHEAHHVPAYALEDTITMKILYTTLYALKLKKVGFLFIGMGICPDGKYALVVSEKNGSILRLPRHTVYPFTSSRKPTQRDLWITAARIIAGRVVSGCNLTGKLLVLVTDATLLTIIRDEATRQHKSVVFITSNPNFASKQALFLHHSALDVQVRQSIPSQIGLLVNLSNRLDDKNLFKRVRSVLRDTCTEIKTIDAILRTTSSRYWSPETLGEIKVDVVDEKYLMETANMPGNMSNQAEPTILSPKNVSKQAFNNPLTVLDWTVTTHIPVTIQPATAIAKFSGNKCYIIIGTSDLAQSVCELMVSNGAKYVVMASRNPTRLSGWVQDMASRGAYIDIKSVDVTDAMSVRKMFSSIRNLTNDRGTSAPPIAGLVHMGLGLKDAAFSALTFEDLQIATDVKAKGSLLLHEQLQEEKLDFFILTSSISYVAGNPGQANYSCANAFMAGLANYRRDMGLAASVVHLGHVAGVGYITRMSQARGVVMEDARKHGLLPISERDLHQIYAEAVLASPADSGRNPEIITGFPELTSDMLESSVWGKQPIFTHLVTAGTRPSTIVQPKPHLSVRERLNNQLSSTITSAPEKAESSSHDIIRNGLVERLSVLLQVDVKQIDEDISLLDMGIDSLVASEIGSWARKELRVQIPHSMIFGGASVANIVDFAVAHLDKEWLALKNGSGEGVGKGK.

The Ketosynthase family 3 (KS3) domain maps to 1–259 (MMAVHLAVAS…GSNVHVIVES (259 aa)). Residues 376–696 (IFTGQGAQWP…SGLLKRSSNS (321 aa)) form a malonyl-CoA:ACP transacylase (MAT) domain region. The interval 766-899 (NELLGEELSM…GSLTVQFGDD (134 aa)) is N-terminal hotdog fold. A dehydratase (DH) domain region spans residues 766 to 1057 (NELLGEELSM…FCTAPFRMST (292 aa)). The region spanning 766-1059 (NELLGEELSM…TAPFRMSTPE (294 aa)) is the PKS/mFAS DH domain. The Proton acceptor; for dehydratase activity role is filled by His-798. The interval 914–1059 (LTELDLDTFY…TAPFRMSTPE (146 aa)) is C-terminal hotdog fold. Catalysis depends on Asp-969, which acts as the Proton donor; for dehydratase activity. The interval 1198–1419 (DGMLTQLYSE…VDERVVSLRD (222 aa)) is methyltransferase (MT) domain. The tract at residues 1932–2111 (CYIIIGTSDL…AASVVHLGHV (180 aa)) is ketoreductase (KR)domain. The 79-residue stretch at 2231–2309 (SSSHDIIRNG…NIVDFAVAHL (79 aa)) folds into the Carrier domain. Ser-2269 is modified (O-(pantetheine 4'-phosphoryl)serine).

It depends on pantetheine 4'-phosphate as a cofactor.

Its function is as follows. Reducing polyketide synthase; part of a gene cluster that mediates the biosynthesis of a yet unidentified natural product. The protein is Reducing polyketide synthase Preu2 of Preussia isomera (Coprophilous fungus).